The primary structure comprises 94 residues: Putative defensin-like protein 88 (94 aa).

Residues 1–26 (MATQKFSYFLLVLLMVFALILPSIIS) form the signal peptide. Intrachain disulfides connect Cys-32-Cys-72, Cys-38-Cys-59, and Cys-48-Cys-71.

It belongs to the DEFL family.

It localises to the secreted. In Arabidopsis thaliana (Mouse-ear cress), this protein is Putative defensin-like protein 88.